The following is a 37-amino-acid chain: Large ribosomal subunit protein bL36 (37 aa).

The protein belongs to the bacterial ribosomal protein bL36 family.

The protein is Large ribosomal subunit protein bL36 of Halothermothrix orenii (strain H 168 / OCM 544 / DSM 9562).